Reading from the N-terminus, the 1982-residue chain is CASP8-associated protein 2 (1982 aa).

A2 is modified (N-acetylalanine). S20 bears the Phosphoserine mark. The span at 159–191 (VKTKDLKSRSPHLDDCSKTDHRAKSDVSKDVHH) shows a compositional bias: basic and acidic residues. The disordered stretch occupies residues 159–552 (VKTKDLKSRS…ESGPNETKNK (394 aa)). A Phosphoserine modification is found at S194. Over residues 198-210 (LEKEGKPHSDKRS) the composition is skewed to basic and acidic residues. Over residues 225–240 (GVWSRSHYQVGEGSSN) the composition is skewed to polar residues. Residues 286-395 (GHPEKYGKGE…ERASLPHSKN (110 aa)) show a composition bias toward basic and acidic residues. Over residues 396-405 (EITFSHNSSK) the composition is skewed to polar residues. 3 stretches are compositionally biased toward basic and acidic residues: residues 406–423 (YHLE…DKSV), 444–455 (KNIDSKEVDAMH), and 463–524 (KAER…KGEV). The residue at position 567 (S567) is a Phosphoserine. Positions 569–593 (AKKQPVSQDNQHKITDIPKSSGVCD) are disordered. Phosphoserine occurs at positions 658, 815, and 875. Disordered stretches follow at residues 875-1017 (SPPQ…DKVM), 1157-1188 (FGRD…DNSN), and 1251-1283 (ERSL…HATL). The segment covering 894–904 (SAHSTSKSQSD) has biased composition (polar residues). 4 stretches are compositionally biased toward basic and acidic residues: residues 905 to 924 (LNKE…EADT), 936 to 965 (GEIR…DVRK), 999 to 1016 (KRPD…KDKV), and 1157 to 1170 (FGRD…EKTS). Residue S940 is modified to Phosphoserine. S1161 carries the phosphoserine modification. Polar residues-rich tracts occupy residues 1171-1181 (KQNAQYSNSQK) and 1269-1281 (GSSI…SQHA). K1343 is subject to N6-acetyllysine. Positions 1683–1687 (YVDLT) match the SUMO interaction motif 1 (SIM); mediates the binding to polysumoylated substrates motif. The NCOA2-binding stretch occupies residues 1709–1982 (DQLGCSGGNL…MKLFEKSKCR (274 aa)). The SUMO interaction motif 2 (SIM); mediates the binding to polysumoylated substrates motif lies at 1737 to 1741 (FIDLT). An SUMO interaction motif 3 (SIM); mediates the binding to polysumoylated substrates motif is present at residues 1794-1798 (YIDLT). Residues 1803-1909 (SSCEVKKDEL…IKDSSAALAT (107 aa)) are disordered. Basic and acidic residues predominate over residues 1851 to 1865 (KETDLTNKEKTKKPT).

In terms of assembly, self-associates. Component of the death-inducing signaling complex (DISC) with CASP8, FADD and FAS. Interacts with NCOA2 and NCOA3. Interacts with SRRT. Interacts with TRAF2. Interacts with NPAT. Interacts (via SIM domains) with SUMO1 and SUMO2. Interacts with SP100; may negatively regulate CASP8AP2 export from the nucleus to the cytoplasm.

The protein resides in the cytoplasm. The protein localises to the nucleus. It localises to the PML body. It is found in the mitochondrion. In terms of biological role, participates in TNF-alpha-induced blockade of glucocorticoid receptor (GR) transactivation at the nuclear receptor coactivator level, upstream and independently of NF-kappa-B. Suppresses both NCOA2- and NCOA3-induced enhancement of GR transactivation. Involved in TNF-alpha-induced activation of NF-kappa-B via a TRAF2-dependent pathway. Acts as a downstream mediator for CASP8-induced activation of NF-kappa-B. Required for the activation of CASP8 in FAS-mediated apoptosis. Required for histone gene transcription and progression through S phase. The protein is CASP8-associated protein 2 of Homo sapiens (Human).